We begin with the raw amino-acid sequence, 176 residues long: RNA pyrophosphohydrolase (176 aa).

A Nudix hydrolase domain is found at 6-149 (GYRPNVGIVI…KRDVYRRVMK (144 aa)). The short motif at 38–59 (GGINPGESAEQAMYRELFEEVG) is the Nudix box element.

The protein belongs to the Nudix hydrolase family. RppH subfamily. A divalent metal cation serves as cofactor.

Its function is as follows. Accelerates the degradation of transcripts by removing pyrophosphate from the 5'-end of triphosphorylated RNA, leading to a more labile monophosphorylated state that can stimulate subsequent ribonuclease cleavage. In Salmonella arizonae (strain ATCC BAA-731 / CDC346-86 / RSK2980), this protein is RNA pyrophosphohydrolase.